Reading from the N-terminus, the 251-residue chain is E3 ubiquitin-protein ligase MARCHF3 (251 aa).

The segment at 61 to 121 adopts an RING-CH-type zinc-finger fold; it reads QSFNDRPMCR…ELCHFRFSVE (61 aa). Cysteine 69, cysteine 72, cysteine 85, cysteine 87, histidine 95, cysteine 98, cysteine 111, and cysteine 114 together coordinate Zn(2+). The next 2 helical transmembrane spans lie at 143 to 163 and 180 to 200; these read LFGD…SGWL and AVGL…WTLV.

It is found in the cytoplasmic vesicle membrane. The protein localises to the early endosome membrane. It carries out the reaction S-ubiquitinyl-[E2 ubiquitin-conjugating enzyme]-L-cysteine + [acceptor protein]-L-lysine = [E2 ubiquitin-conjugating enzyme]-L-cysteine + N(6)-ubiquitinyl-[acceptor protein]-L-lysine.. Its pathway is protein modification; protein ubiquitination. Its function is as follows. E3 ubiquitin-protein ligase which may be involved in endosomal trafficking. E3 ubiquitin ligases accept ubiquitin from an E2 ubiquitin-conjugating enzyme in the form of a thioester and then directly transfer the ubiquitin to targeted substrates. The polypeptide is E3 ubiquitin-protein ligase MARCHF3 (marchf3) (Xenopus tropicalis (Western clawed frog)).